We begin with the raw amino-acid sequence, 462 residues long: Argininosuccinate lyase (462 aa).

Belongs to the lyase 1 family. Argininosuccinate lyase subfamily.

The protein localises to the cytoplasm. The enzyme catalyses 2-(N(omega)-L-arginino)succinate = fumarate + L-arginine. It functions in the pathway amino-acid biosynthesis; L-arginine biosynthesis; L-arginine from L-ornithine and carbamoyl phosphate: step 3/3. This chain is Argininosuccinate lyase, found in Bacillus cytotoxicus (strain DSM 22905 / CIP 110041 / 391-98 / NVH 391-98).